We begin with the raw amino-acid sequence, 428 residues long: Enolase (428 aa).

Q163 serves as a coordination point for (2R)-2-phosphoglycerate. The active-site Proton donor is E205. The Mg(2+) site is built by D242, E285, and D312. (2R)-2-phosphoglycerate-binding residues include K337, R366, S367, and K388. K337 (proton acceptor) is an active-site residue.

This sequence belongs to the enolase family. Mg(2+) serves as cofactor.

The protein resides in the cytoplasm. It localises to the secreted. The protein localises to the cell surface. The catalysed reaction is (2R)-2-phosphoglycerate = phosphoenolpyruvate + H2O. Its pathway is carbohydrate degradation; glycolysis; pyruvate from D-glyceraldehyde 3-phosphate: step 4/5. Catalyzes the reversible conversion of 2-phosphoglycerate (2-PG) into phosphoenolpyruvate (PEP). It is essential for the degradation of carbohydrates via glycolysis. The polypeptide is Enolase (Erythrobacter litoralis (strain HTCC2594)).